We begin with the raw amino-acid sequence, 147 residues long: 3-dehydroquinate dehydratase (147 aa).

Tyr23 serves as the catalytic Proton acceptor. Residues Asn75, His81, and Asp88 each contribute to the substrate site. His101 acts as the Proton donor in catalysis. Substrate is bound by residues 102–103 (LS) and Arg112.

This sequence belongs to the type-II 3-dehydroquinase family. Homododecamer.

The enzyme catalyses 3-dehydroquinate = 3-dehydroshikimate + H2O. It participates in metabolic intermediate biosynthesis; chorismate biosynthesis; chorismate from D-erythrose 4-phosphate and phosphoenolpyruvate: step 3/7. Functionally, catalyzes a trans-dehydration via an enolate intermediate. The chain is 3-dehydroquinate dehydratase from Hahella chejuensis (strain KCTC 2396).